A 286-amino-acid polypeptide reads, in one-letter code: Pantothenate synthetase (286 aa).

30–37 (MGALHEGH) contributes to the ATP binding site. H37 serves as the catalytic Proton donor. Q61 serves as a coordination point for (R)-pantoate. Residue Q61 coordinates beta-alanine. Residue 147–150 (GEKD) coordinates ATP. Q153 contacts (R)-pantoate. ATP-binding positions include V180 and 188 to 191 (LSSR).

Belongs to the pantothenate synthetase family. In terms of assembly, homodimer.

The protein localises to the cytoplasm. It catalyses the reaction (R)-pantoate + beta-alanine + ATP = (R)-pantothenate + AMP + diphosphate + H(+). The protein operates within cofactor biosynthesis; (R)-pantothenate biosynthesis; (R)-pantothenate from (R)-pantoate and beta-alanine: step 1/1. In terms of biological role, catalyzes the condensation of pantoate with beta-alanine in an ATP-dependent reaction via a pantoyl-adenylate intermediate. This is Pantothenate synthetase from Novosphingobium aromaticivorans (strain ATCC 700278 / DSM 12444 / CCUG 56034 / CIP 105152 / NBRC 16084 / F199).